Here is a 136-residue protein sequence, read N- to C-terminus: Nucleoside diphosphate kinase (136 aa).

ATP is bound by residues K10, F58, R86, T92, R104, and N114. H117 acts as the Pros-phosphohistidine intermediate in catalysis.

This sequence belongs to the NDK family. Homotetramer. It depends on Mg(2+) as a cofactor.

It localises to the cytoplasm. The enzyme catalyses a 2'-deoxyribonucleoside 5'-diphosphate + ATP = a 2'-deoxyribonucleoside 5'-triphosphate + ADP. The catalysed reaction is a ribonucleoside 5'-diphosphate + ATP = a ribonucleoside 5'-triphosphate + ADP. In terms of biological role, major role in the synthesis of nucleoside triphosphates other than ATP. The ATP gamma phosphate is transferred to the NDP beta phosphate via a ping-pong mechanism, using a phosphorylated active-site intermediate. The sequence is that of Nucleoside diphosphate kinase from Corynebacterium glutamicum (strain R).